Here is a 101-residue protein sequence, read N- to C-terminus: Urease subunit beta (101 aa).

Belongs to the urease beta subunit family. Heterotrimer of UreA (gamma), UreB (beta) and UreC (alpha) subunits. Three heterotrimers associate to form the active enzyme.

The protein resides in the cytoplasm. The catalysed reaction is urea + 2 H2O + H(+) = hydrogencarbonate + 2 NH4(+). It functions in the pathway nitrogen metabolism; urea degradation; CO(2) and NH(3) from urea (urease route): step 1/1. In Dinoroseobacter shibae (strain DSM 16493 / NCIMB 14021 / DFL 12), this protein is Urease subunit beta.